Consider the following 879-residue polypeptide: Alanine--tRNA ligase (879 aa).

Zn(2+) contacts are provided by His567, His571, Cys669, and His673.

The protein belongs to the class-II aminoacyl-tRNA synthetase family. The cofactor is Zn(2+).

Its subcellular location is the cytoplasm. It catalyses the reaction tRNA(Ala) + L-alanine + ATP = L-alanyl-tRNA(Ala) + AMP + diphosphate. In terms of biological role, catalyzes the attachment of alanine to tRNA(Ala) in a two-step reaction: alanine is first activated by ATP to form Ala-AMP and then transferred to the acceptor end of tRNA(Ala). Also edits incorrectly charged Ser-tRNA(Ala) and Gly-tRNA(Ala) via its editing domain. This Lactobacillus helveticus (strain DPC 4571) protein is Alanine--tRNA ligase.